We begin with the raw amino-acid sequence, 259 residues long: MAEDATLVDETALEAAAGESPPSNATACGELAPSPLLRGKWLKDDMPRERLLRQGPGVLSDTEMIVLILGSGLPGHDVFSVARELLDRFGSLRAMLDATYTDFDGLRGIGPAKKAQLLAIMEMARRSLVDKLRSRSLLNSPEAVENYLRLRIGGRPLEVFVSLFLDARHRLIHCEESAQGTLTRMAVYPREIVRRALSLNAASLIVAHNHPSGAVQPSASDCRLTHTLRDALTLIDVQLVDHLVVGVDSVYSFARAGWP.

The MPN domain maps to 137–259 (LLNSPEAVEN…VYSFARAGWP (123 aa)). Residues His-208, His-210, and Asp-221 each coordinate Zn(2+). The JAMM motif signature appears at 208-221 (HNHPSGAVQPSASD).

Belongs to the UPF0758 family.

The sequence is that of UPF0758 protein Bphyt_3148 from Paraburkholderia phytofirmans (strain DSM 17436 / LMG 22146 / PsJN) (Burkholderia phytofirmans).